The following is a 145-amino-acid chain: Major pollen allergen Ole e 1 (145 aa).

3 disulfides stabilise this stretch: Cys19-Cys90, Cys22-Cys131, and Cys43-Cys78. Asn111 carries an N-linked (GlcNAc...) (complex) asparagine; alternate glycan. Residue Asn111 is glycosylated (N-linked (GlcNAc...) (high mannose) asparagine; alternate).

Belongs to the Ole e I family. In terms of processing, N-glycosylated; contains high mannose (Man(7)-GlcNAc) and partially fucosylated complex glycans (GlcNAc-Man(3)-Xyl-GlcNAc). Complex glycans may contribute to the antigenicity. Exists both in a glycosylated and in a non-glycosylated form. Ole e 1 and Ole e 1.0103 are the only non-glycosylated isoallergens. A second potential glycosylation site exists at position 50 in cv. Bella de Espana and cv. Hojiblanca. As to expression, expressed in tapetum and pollen grains. Not detected in petals, roots or leaves.

The protein localises to the endoplasmic reticulum. Its subcellular location is the secreted. Functionally, may be involved in recognition between pollen-stigma and pollen tube-style cells. The protein is Major pollen allergen Ole e 1 of Olea europaea (Common olive).